The chain runs to 7214 residues: Nonribosomal peptide synthetase atnA (7214 aa).

Residues 257–651 are adenylation 1; it reads ERKALEQPHA…VGRKDTQVKI (395 aa). Positions 786 to 862 constitute a Carrier 1 domain; the sequence is EPVTETEKAV…AMSQIAVELS (77 aa). An O-(pantetheine 4'-phosphoryl)serine modification is found at serine 823. The condensation 1 stretch occupies residues 899 to 1318; that stretch reads EDAYPATALQ…LVSQKDYTQI (420 aa). Residues 1340–1735 form an adenylation 2 region; sequence QVLATPDAPA…ARKDTQAKVR (396 aa). Residues 1877–1953 enclose the Carrier 2 domain; it reads QPTSDIEKKV…ALAGRAQYIE (77 aa). Serine 1914 is modified (O-(pantetheine 4'-phosphoryl)serine). Residues 1962 to 2384 form an epimerization region; sequence PEAEVIDEWF…RQVLETGIDE (423 aa). Residues 2431–2845 form a condensation 2 region; it reads SPCSPMQLGL…MLSPLDRASL (415 aa). The segment at 2866–3262 is adenylation 3; that stretch reads QNARKRPHAL…VGRKDTQVKV (397 aa). The region spanning 3398–3472 is the Carrier 3 domain; that stretch reads ALETPMEETI…DMARIVVAAY (75 aa). Serine 3433 is modified (O-(pantetheine 4'-phosphoryl)serine). The tract at residues 3510-3904 is condensation 3; the sequence is VEDVYPSTSL…QLCENEDGRL (395 aa). The tract at residues 3943-4339 is adenylation 4; that stretch reads ERARLHPDLL…VGRKDSQVKL (397 aa). Residues 4476–4552 enclose the Carrier 4 domain; that stretch reads VPGSEAEKVI…ELAGRVTSIS (77 aa). Serine 4513 is modified (O-(pantetheine 4'-phosphoryl)serine). The segment at 4601–5033 is condensation 4; it reads VEDVYPCSPL…TSAAMRAQLL (433 aa). Residues 5051 to 5446 are adenylation 5; sequence FHRTALRYPE…VGRKDTQIKF (396 aa). The tract at residues 5489–5515 is disordered; it reads FITTEGGSGHENKGSPSLKGSSGDPVS. The Carrier 5 domain maps to 5591-5667; that stretch reads APRTAMEKRL…QMANIVARNA (77 aa). Serine 5628 carries the post-translational modification O-(pantetheine 4'-phosphoryl)serine. Residues 5707-6123 are condensation 5; that stretch reads QDVYPCTPLQ…HLLGDNEIKM (417 aa). The interval 6145–6543 is adenylation 6; it reads ERAVLQPEAI…GRKDTQIKLR (399 aa). Positions 6683 to 6766 constitute a Carrier 6 domain; it reads DPADKLALAL…DVARMIEHGN (84 aa). Serine 6725 is subject to O-(pantetheine 4'-phosphoryl)serine. Residues 6814–7194 are thioesterase (TE) domain; it reads ILLTGATGFL…KSISYMRQIG (381 aa). The disordered stretch occupies residues 6895 to 6915; that stretch reads STVEGRDHPGSESGSTAGPAE.

It belongs to the NRP synthetase family.

The protein operates within secondary metabolite biosynthesis. Functionally, nonribosomal peptide synthetase; part of the gene cluster that mediates the biosynthesis of aspercryptins, linear lipopeptides built from six amino acids including 2 highly unusual and nonproteogenic amino acids, 2-amino-octanoic acid (2aoa) and 2-amino-dodecanol (2adol). The core structure of aspercryptins is as follows: Ser/Ala-Thr-Ile/Val-2aoa-Asn-2adol. The first step of aspercryptin biosynthesis is the generation of the fatty acid precursors, octanoic and dodecanoic acids, by the FAS subunits atnF and atnM. The fatty acid precursors are likely transformed into the corresponding alpha-amino fatty acids in three steps. First, they are hydroxylated by the cytochrome P450 monooxygenase atnE, then oxidized to the corresponding alpha-keto acids by the NAD(P)-dependent oxidoreductase atnD, and finally converted to the alpha-amino fatty acids by the PLP-dependent aminotransferases atnH or atnJ. the alpha-amino fatty acids, 2-amino-octanoic and 2-amino-dodecanoic acids, are recognized, activated, and covalently tethered to the NRPS atnA by its fourth and sixth adenylation domains. The second module of atnA is the Thr module and contains an epimerase (E) domain responsible for the epimerization of Thr to D-allo-Thr. Additionally, despite atnA having only one epimerase domain, the first amino acid of aspercryptin A1 is D-Ser, suggesting that serine is either loaded directly as D-Ser on the first module or that the epimerase domain in the threonine module epimerizes both L-Ser and L-Thr. After condensation of the hexapeptide of aspercryptin, the C-terminal reductase (TE) domain might be involved in the reductive release and production of the aldehyde hexapeptide. Further reduction would generate aspercryptins. The variety of aspercryptins produced reflects the flexibility of the atnA NRPS, allowing incorporation of alanine instead of serine, valine for isoleucine, and a C10 fatty amino alcohol instead of the C12 version. AtnB seems to be involved in the selectivity for Ile versus Val by the third module. Moreover, type B, C and D aspercryptins have an additional N-terminal cichorine, acetyl and propionyl group respectively. The polypeptide is Nonribosomal peptide synthetase atnA (Emericella nidulans (strain FGSC A4 / ATCC 38163 / CBS 112.46 / NRRL 194 / M139) (Aspergillus nidulans)).